The primary structure comprises 506 residues: Maturase K (506 aa).

This sequence belongs to the intron maturase 2 family. MatK subfamily.

The protein resides in the plastid. It is found in the chloroplast. Its function is as follows. Usually encoded in the trnK tRNA gene intron. Probably assists in splicing its own and other chloroplast group II introns. The sequence is that of Maturase K from Prunus persica (Peach).